The sequence spans 265 residues: uncharacterized protein (265 aa).

A divalent metal cation contacts are provided by His-7, His-9, Glu-95, His-131, His-156, and Asp-206.

The protein belongs to the metallo-dependent hydrolases superfamily. TatD-type hydrolase family. The cofactor is a divalent metal cation.

This is an uncharacterized protein from Buchnera aphidicola subsp. Baizongia pistaciae (strain Bp).